Consider the following 318-residue polypeptide: tRNA(Ile)-lysidine synthase (318 aa).

ATP is bound at residue 26 to 31; sequence SGGADS.

Belongs to the tRNA(Ile)-lysidine synthase family.

The protein resides in the cytoplasm. It carries out the reaction cytidine(34) in tRNA(Ile2) + L-lysine + ATP = lysidine(34) in tRNA(Ile2) + AMP + diphosphate + H(+). Functionally, ligates lysine onto the cytidine present at position 34 of the AUA codon-specific tRNA(Ile) that contains the anticodon CAU, in an ATP-dependent manner. Cytidine is converted to lysidine, thus changing the amino acid specificity of the tRNA from methionine to isoleucine. The polypeptide is tRNA(Ile)-lysidine synthase (Nocardia farcinica (strain IFM 10152)).